Here is a 450-residue protein sequence, read N- to C-terminus: Ribosomal protein uS12 methylthiotransferase RimO (450 aa).

The MTTase N-terminal domain maps to 7–123; that stretch reads QKVSMVSLGC…IAEILAEKSG (117 aa). Residues Cys-16, Cys-52, Cys-86, Cys-161, Cys-165, and Cys-168 each coordinate [4Fe-4S] cluster. Positions 147-377 constitute a Radical SAM core domain; the sequence is SSPAWFSYLK…MRIQARLSFK (231 aa). Residues 380–448 enclose the TRAM domain; sequence RELIGTTEQV…DYDLIGEIQE (69 aa).

The protein belongs to the methylthiotransferase family. RimO subfamily. [4Fe-4S] cluster is required as a cofactor.

The protein resides in the cytoplasm. It catalyses the reaction L-aspartate(89)-[ribosomal protein uS12]-hydrogen + (sulfur carrier)-SH + AH2 + 2 S-adenosyl-L-methionine = 3-methylsulfanyl-L-aspartate(89)-[ribosomal protein uS12]-hydrogen + (sulfur carrier)-H + 5'-deoxyadenosine + L-methionine + A + S-adenosyl-L-homocysteine + 2 H(+). Its function is as follows. Catalyzes the methylthiolation of an aspartic acid residue of ribosomal protein uS12. The polypeptide is Ribosomal protein uS12 methylthiotransferase RimO (Pelobacter propionicus (strain DSM 2379 / NBRC 103807 / OttBd1)).